We begin with the raw amino-acid sequence, 366 residues long: Molybdopterin synthase catalytic subunit (366 aa).

Substrate-binding positions include 101–102 (HR), Lys117, and 124–126 (KKE).

Belongs to the MoaE family. MOCS2B subfamily. In terms of assembly, heterotetramer; composed of 2 small (Mocs2A) and 2 large (Mocs2B) subunits.

It is found in the cytoplasm. The catalysed reaction is 2 [molybdopterin-synthase sulfur-carrier protein]-C-terminal-Gly-aminoethanethioate + cyclic pyranopterin phosphate + H2O = molybdopterin + 2 [molybdopterin-synthase sulfur-carrier protein]-C-terminal Gly-Gly + 2 H(+). Its pathway is cofactor biosynthesis; molybdopterin biosynthesis. Its function is as follows. Catalytic subunit of the molybdopterin synthase complex, a complex that catalyzes the conversion of precursor Z into molybdopterin. Acts by mediating the incorporation of 2 sulfur atoms from thiocarboxylated Mocs2A into precursor Z to generate a dithiolene group. This chain is Molybdopterin synthase catalytic subunit, found in Drosophila mojavensis (Fruit fly).